The chain runs to 61 residues: Potassium channel toxin alpha-KTx 5.3 (61 aa).

The N-terminal stretch at 1 to 28 (MHNYYKIVLIMVAFFAVIITFSNIQVEG) is a signal peptide. Intrachain disulfides connect C31/C49, C36/C54, and C40/C56. The [R/K]XCQ motif stretch occupies residues 34–37 (KRCQ). H59 carries the histidine amide modification.

The protein belongs to the short scorpion toxin superfamily. Potassium channel inhibitor family. Alpha-KTx 05 subfamily. In terms of tissue distribution, expressed by the venom gland.

The protein localises to the secreted. Functionally, blocks small conductance calcium-activated potassium channels (KCNN, SK). Has also been shown to weakly inhibit Kv11.1/KCNH2/ERG1, Kv1.2/KCNA2, Kv1.3/KCNA3 and Kv2.1/KCNB1 voltage-gated potassium channels. The protein is Potassium channel toxin alpha-KTx 5.3 of Olivierus martensii (Manchurian scorpion).